The sequence spans 79 residues: DNA-directed RNA polymerase subunit omega (79 aa).

Belongs to the RNA polymerase subunit omega family. The RNAP catalytic core consists of 2 alpha, 1 beta, 1 beta' and 1 omega subunit. When a sigma factor is associated with the core the holoenzyme is formed, which can initiate transcription.

The catalysed reaction is RNA(n) + a ribonucleoside 5'-triphosphate = RNA(n+1) + diphosphate. In terms of biological role, promotes RNA polymerase assembly. Latches the N- and C-terminal regions of the beta' subunit thereby facilitating its interaction with the beta and alpha subunits. This is DNA-directed RNA polymerase subunit omega from Kosmotoga olearia (strain ATCC BAA-1733 / DSM 21960 / TBF 19.5.1).